The following is a 178-amino-acid chain: Caveolin-1 (178 aa).

N-acetylserine is present on serine 2. A Phosphoserine modification is found at serine 2. The tract at residues 2-94 (SGGKYVDSEG…WKASFTTFTV (93 aa)) is required for homooligomerization. The Cytoplasmic segment spans residues 2–104 (SGGKYVDSEG…TKYWFYRLLS (103 aa)). Residue lysine 5 is modified to N6-acetyllysine; alternate. Lysine 5 is covalently cross-linked (Glycyl lysine isopeptide (Lys-Gly) (interchain with G-Cter in ubiquitin); alternate). Residue tyrosine 6 is modified to Phosphotyrosine. A Phosphoserine modification is found at serine 9. Tyrosine 14 is subject to Phosphotyrosine; by ABL1. Tyrosine 25 carries the phosphotyrosine modification. Glycyl lysine isopeptide (Lys-Gly) (interchain with G-Cter in ubiquitin) cross-links involve residues lysine 26 and lysine 30. Serine 37 bears the Phosphoserine mark. Residues lysine 39, lysine 47, and lysine 57 each participate in a glycyl lysine isopeptide (Lys-Gly) (interchain with G-Cter in ubiquitin) cross-link. Positions 82-94 (DGIWKASFTTFTV) are interaction with CAVIN3. The segment at residues 105-125 (ALFGIPMALIWGIYFAILSFL) is an intramembrane region (helical). Residues 126-178 (HIWAVVPCIKSFLIEIQCISRVYSIYIHTVCDPLFEAIGKIFSNVRISLQKEI) are Cytoplasmic-facing. The interacts with SPRY1, SPRY2, SPRY3 and SPRY4 stretch occupies residues 131-142 (VPCIKSFLIEIQ). S-palmitoyl cysteine attachment occurs at residues cysteine 133, cysteine 143, and cysteine 156. The interval 149–160 (SIYIHTVCDPLF) is interacts with SPRY1, SPRY2, and SPRY4. The tract at residues 167–178 (FSNVRISLQKEI) is interacts with SPRY1, SPRY2, SPRY3 and SPRY4.

This sequence belongs to the caveolin family. As to quaternary structure, homooligomer. Interacts with GLIPR2. Interacts with NOSTRIN. Interacts with SNAP25 and STX1A. Interacts (via the N-terminus) with DPP4; the interaction is direct. Interacts with CTNNB1, CDH1 and JUP. Interacts with PACSIN2; this interaction induces membrane tubulation. Interacts with SLC7A9. Interacts with BMX and BTK. Interacts with TGFBR1. Interacts with CAVIN3 (via leucine-zipper domain) in a cholesterol-sensitive manner. Interacts with CAVIN1. Interacts with EHD2 in a cholesterol-dependent manner. Forms a ternary complex with UBXN6 and VCP; mediates CAV1 targeting to lysosomes for degradation. Interacts with ABCG1; this interaction regulates ABCG1-mediated cholesterol efflux. Interacts with NEU3; this interaction enhances NEU3 sialidase activity within caveola. Interacts (via C-terminus) with SPRY1, SPRY2 (via C-terminus), SPRY3, and SPRY4. Interacts with IGFBP5; this interaction allows trafficking of IGFBP5 from the plasma membrane to the nucleus. Phosphorylated at Tyr-14 by ABL1 in response to oxidative stress. In terms of processing, ubiquitinated. Undergo monoubiquitination and multi- and/or polyubiquitination. Monoubiquitination of N-terminal lysines promotes integration in a ternary complex with UBXN6 and VCP which promotes oligomeric CAV1 targeting to lysosomes for degradation. Ubiquitinated by ZNRF1; leading to degradation and modulation of the TLR4-mediated immune response.

Its subcellular location is the golgi apparatus membrane. The protein resides in the cell membrane. It is found in the membrane. It localises to the caveola. The protein localises to the membrane raft. Functionally, may act as a scaffolding protein within caveolar membranes. Forms a stable heterooligomeric complex with CAV2 that targets to lipid rafts and drives caveolae formation. Mediates the recruitment of CAVIN proteins (CAVIN1/2/3/4) to the caveolae. Interacts directly with G-protein alpha subunits and can functionally regulate their activity. Involved in the costimulatory signal essential for T-cell receptor (TCR)-mediated T-cell activation. Its binding to DPP4 induces T-cell proliferation and NF-kappa-B activation in a T-cell receptor/CD3-dependent manner. Recruits CTNNB1 to caveolar membranes and may regulate CTNNB1-mediated signaling through the Wnt pathway. Negatively regulates TGFB1-mediated activation of SMAD2/3 by mediating the internalization of TGFBR1 from membrane rafts leading to its subsequent degradation. Binds 20(S)-hydroxycholesterol (20(S)-OHC). This chain is Caveolin-1 (CAV1), found in Aotus nancymaae (Ma's night monkey).